A 677-amino-acid polypeptide reads, in one-letter code: Methionine--tRNA ligase (677 aa).

The 'HIGH' region signature appears at 15–25; the sequence is PYANGSIHLGH. Positions 146, 149, 159, and 162 each coordinate Zn(2+). Residues 333 to 337 carry the 'KMSKS' region motif; it reads KMSKS. Lys-336 is a binding site for ATP. In terms of domain architecture, tRNA-binding spans 575–677; that stretch reads DFAKVDLRVA…AGAKPGHQVK (103 aa).

This sequence belongs to the class-I aminoacyl-tRNA synthetase family. MetG type 1 subfamily. Homodimer. It depends on Zn(2+) as a cofactor.

It localises to the cytoplasm. The enzyme catalyses tRNA(Met) + L-methionine + ATP = L-methionyl-tRNA(Met) + AMP + diphosphate. In terms of biological role, is required not only for elongation of protein synthesis but also for the initiation of all mRNA translation through initiator tRNA(fMet) aminoacylation. This Escherichia coli O6:K15:H31 (strain 536 / UPEC) protein is Methionine--tRNA ligase.